Reading from the N-terminus, the 464-residue chain is Keratin, type I cytoskeletal 28 (464 aa).

The head stretch occupies residues M1–N85. Residues E86–W121 are coil 1A. An IF rod domain is found at E86 to C401. A linker 1 region spans residues Y122 to T143. The tract at residues I144 to L235 is coil 1B. The segment at Q236–L258 is linker 12. A coil 2 region spans residues L259–D397. Residues R398 to F464 are tail. The segment covering S402–K417 has biased composition (low complexity). 2 disordered regions span residues S402–T422 and S440–F464.

This sequence belongs to the intermediate filament family. As to quaternary structure, heterotetramer of two type I and two type II keratins.

The protein localises to the cytoplasm. Its function is as follows. Essential for the proper assembly of types I and II keratin protein complexes and the formation of keratin intermediate filaments in the inner root sheath (irs). This chain is Keratin, type I cytoskeletal 28, found in Bos taurus (Bovine).